Consider the following 378-residue polypeptide: P2X receptor A (378 aa).

Over 1–27 (MGFSFDWDDIFQYSTVKIVRIRDRRLG) the chain is Cytoplasmic. The chain crosses the membrane as a helical span at residues 28-48 (ILHLSFLVGIVAYIVVYSAII). Residues 49–307 (KKGYLFTEVP…IQTGTIGSFH (259 aa)) are Lumenal-facing. The interval 290 to 303 (RHGIRVIFIQTGTI) is pore-forming motif. The helical transmembrane segment at 308–328 (FQTLLLTLVSGLGLLAVATTV) threads the bilayer. The Cytoplasmic segment spans residues 329–378 (VDQLAIRLLPQRKSYSSLKFQVTESMSNPMKKRITTDEGEDVLYTRIEGL).

This sequence belongs to the P2X receptor family.

It localises to the contractile vacuole membrane. P2X receptors are ATP-gated ion channels that play a role in intracellular calcium signaling. Not required for the purinergic response to extracellular nucleotides. Inward currents evoked by intracellular ATP and ATP analogs. Exclusively selective for ATP over other nucleotides. Insensitive to P2 receptor antagonists PPADS, suramin and 2',3'-O-(2,4,6-trinitrophenyl)-ATP but inhibited by nanomolar concentrations of copper and sodium ion. More permeable to ammonium than either sodium or potassium ions and less permeable to choline. It has been reported that p2xA is not essential for osmoregulation, however this information is in contradiction with another source which indicates that p2xA is required for osmoregulation. Found to be permeable to chloride ions. Inhibited by copper and sodium ions. This Dictyostelium discoideum (Social amoeba) protein is P2X receptor A (p2xA).